The chain runs to 518 residues: Equilibrative nucleoside transporter 4 (518 aa).

Residues 1–10 (MGSKGAERRK) are compositionally biased toward basic and acidic residues. Positions 1–21 (MGSKGAERRKQATPGQTPEGN) are disordered. Over 1–66 (MGSKGAERRK…EEAVPDDRYH (66 aa)) the chain is Extracellular. Residues 67 to 87 (GIYFAMLLAGVGFLLPYNSFI) form a helical membrane-spanning segment. Residues 88–99 (TDVDYLHHKFEG) are Cytoplasmic-facing. The chain crosses the membrane as a helical span at residues 100–120 (TSIVFDMGLTYILVALVAVIL). The Extracellular portion of the chain corresponds to 121–133 (NNVLVEMLSLHTR). The helical transmembrane segment at 134 to 154 (ITVGYLFALGPLLFVTIFDVW) threads the bilayer. The Cytoplasmic portion of the chain corresponds to 155–157 (LER). A helical membrane pass occupies residues 158-178 (FTIKQAYVINLMSMGTVAFGC). Residues 179–198 (TVQQSSFYGYMGMLPKRYTQ) lie on the Extracellular side of the membrane. Residues 199 to 218 (GVMTGESTAGVIISLSRIFT) form a helical membrane-spanning segment. The Cytoplasmic segment spans residues 219-229 (KLLIKDERKNT). Residues 230–250 (IIFFVISICMVLVCFILHLLV) form a helical membrane-spanning segment. Topologically, residues 251-342 (RRTRFVQYYT…MILHRYVVAR (92 aa)) are extracellular. The chain crosses the membrane as a helical span at residues 343 to 363 (VIWTYMLSIAVTYFITLCLFP). Residues 364–376 (GLESEIKNATLGE) lie on the Cytoplasmic side of the membrane. A helical membrane pass occupies residues 377 to 397 (WLPILIMAIFNISDFVGKILA). The Extracellular segment spans residues 398-407 (AVPYEWNGTR). A helical membrane pass occupies residues 408 to 428 (LLFFSCVRVVFIPLFIMCVYP). At 429-439 (AQMPMFSHPAW) the chain is on the cytoplasmic side. The chain crosses the membrane as a helical span at residues 440-460 (PCIFSLFMGITNGYFGSVPMI). The Extracellular portion of the chain corresponds to 461 to 476 (HAAGKVAPEQRELAGN). Residues 477-497 (IMTVSYMSGLMLGSVVAYAAY) traverse the membrane as a helical segment. Over 498 to 518 (SFTASGSSFHSQTGYNFTQGY) the chain is Cytoplasmic.

This sequence belongs to the SLC29A/ENT transporter (TC 2.A.57) family.

It is found in the membrane. In terms of biological role, functions as a polyspecific organic cation transporter, efficiently transporting many organic cations such as monoamine neurotransmitters 1-methyl-4-phenylpyridinium and biogenic amines including serotonin, dopamine, norepinephrine and epinephrine. May play a role in regulating central nervous system homeostasis of monoamine neurotransmitters. May be involved in luminal transport of organic cations in the kidney and seems to use luminal proton gradient to drive organic cation reabsorption. Does not seem to transport nucleoside and nucleoside analogs such as uridine, cytidine, thymidine, adenosine, inosine, guanosine, and azidothymidine. The chain is Equilibrative nucleoside transporter 4 (slc29a4) from Danio rerio (Zebrafish).